We begin with the raw amino-acid sequence, 340 residues long: Uroporphyrinogen decarboxylase (340 aa).

Substrate-binding positions include 21–25 (RQAGR), Asp-71, Tyr-147, Ser-202, and His-316.

Belongs to the uroporphyrinogen decarboxylase family. Homodimer.

The protein resides in the cytoplasm. The enzyme catalyses uroporphyrinogen III + 4 H(+) = coproporphyrinogen III + 4 CO2. It participates in porphyrin-containing compound metabolism; protoporphyrin-IX biosynthesis; coproporphyrinogen-III from 5-aminolevulinate: step 4/4. Catalyzes the decarboxylation of four acetate groups of uroporphyrinogen-III to yield coproporphyrinogen-III. This chain is Uroporphyrinogen decarboxylase, found in Nitratiruptor sp. (strain SB155-2).